A 92-amino-acid polypeptide reads, in one-letter code: Acylphosphatase (92 aa).

One can recognise an Acylphosphatase-like domain in the interval 5 to 92 (RWHLLVSGKV…QEFTDFRTTH (88 aa)). Active-site residues include R20 and N38.

Belongs to the acylphosphatase family.

It carries out the reaction an acyl phosphate + H2O = a carboxylate + phosphate + H(+). The polypeptide is Acylphosphatase (acyP) (Marinobacter nauticus (strain ATCC 700491 / DSM 11845 / VT8) (Marinobacter aquaeolei)).